The chain runs to 197 residues: FMN-dependent NADH:quinone oxidoreductase (197 aa).

Residue Ser10 participates in FMN binding.

The protein belongs to the azoreductase type 1 family. As to quaternary structure, homodimer. Requires FMN as cofactor.

The catalysed reaction is 2 a quinone + NADH + H(+) = 2 a 1,4-benzosemiquinone + NAD(+). It catalyses the reaction N,N-dimethyl-1,4-phenylenediamine + anthranilate + 2 NAD(+) = 2-(4-dimethylaminophenyl)diazenylbenzoate + 2 NADH + 2 H(+). Functionally, quinone reductase that provides resistance to thiol-specific stress caused by electrophilic quinones. In terms of biological role, also exhibits azoreductase activity. Catalyzes the reductive cleavage of the azo bond in aromatic azo compounds to the corresponding amines. The protein is FMN-dependent NADH:quinone oxidoreductase of Mycoplasma genitalium (strain ATCC 33530 / DSM 19775 / NCTC 10195 / G37) (Mycoplasmoides genitalium).